A 295-amino-acid chain; its full sequence is Shikimate dehydrogenase (NADP(+)) (295 aa).

Residues 24-26 (SRS) and T71 each bind shikimate. The Proton acceptor role is filled by K75. Residue E87 participates in NADP(+) binding. Positions 96 and 111 each coordinate shikimate. NADP(+) contacts are provided by residues 136–140 (GAGGA), 160–165 (NRTASR), and M233. Shikimate is bound at residue Y235. NADP(+) is bound at residue G256.

The protein belongs to the shikimate dehydrogenase family. In terms of assembly, homodimer.

It catalyses the reaction shikimate + NADP(+) = 3-dehydroshikimate + NADPH + H(+). It participates in metabolic intermediate biosynthesis; chorismate biosynthesis; chorismate from D-erythrose 4-phosphate and phosphoenolpyruvate: step 4/7. Involved in the biosynthesis of the chorismate, which leads to the biosynthesis of aromatic amino acids. Catalyzes the reversible NADPH linked reduction of 3-dehydroshikimate (DHSA) to yield shikimate (SA). This Cupriavidus necator (strain ATCC 17699 / DSM 428 / KCTC 22496 / NCIMB 10442 / H16 / Stanier 337) (Ralstonia eutropha) protein is Shikimate dehydrogenase (NADP(+)).